The following is a 279-amino-acid chain: tRNA dimethylallyltransferase (279 aa).

10–17 (GPTASGKS) contacts ATP. 12–17 (TASGKS) lines the substrate pocket.

This sequence belongs to the IPP transferase family. Monomer. The cofactor is Mg(2+).

The catalysed reaction is adenosine(37) in tRNA + dimethylallyl diphosphate = N(6)-dimethylallyladenosine(37) in tRNA + diphosphate. Catalyzes the transfer of a dimethylallyl group onto the adenine at position 37 in tRNAs that read codons beginning with uridine, leading to the formation of N6-(dimethylallyl)adenosine (i(6)A). The protein is tRNA dimethylallyltransferase of Roseobacter denitrificans (strain ATCC 33942 / OCh 114) (Erythrobacter sp. (strain OCh 114)).